A 541-amino-acid chain; its full sequence is MRKQDKRSAEIYSISKALMAPTRLETTLNNFVNTLSLILRMRRGGLEIPASEGETKITAATRNSGSPSAADYTVPKAAIDQVMTAGRLVVPDVCNSELFKDQIKWRGIGPTAFIAAAVEVDHETGGMLWFECAEESDYDYEEEVHFLSMAANLAGRAIRLHRTISRRERTFAEEQQEQQNSRDEQSQSSARQRLLKNDGIIGESTALMTAVDTAKVMAETNSIVLLRGETGTGKECFAKLIHQHSTRQKKPFIKFNCPALSESLLESELFGHEKGAFTGAIAQRVGRFESANGGTLLLDEIGEIPPAFQAKLLRVIQEGEFERVGGTKTLKVDVRLIFATNKDLEMAVQNGEFREDLYYRISGVPLILPPLRHRDGDIPLLARAFLQRFNEENGRDLHFAPSALDHLSKCKFPGNVRELENCVRRTATLARSKTITSSDFACQTDQCFSSRLWKGVHCSHGHIEIDAPAGTTPLLGAPANDVPPKEPGSAGVASNLIERDRLISALEEAGWNQAKAARILEKTPRQVGYALRRHGVDVRKL.

The GAF domain maps to 23–158 (RLETTLNNFV…MAANLAGRAI (136 aa)). Positions 170 to 191 (TFAEEQQEQQNSRDEQSQSSAR) are disordered. Positions 200-428 (IIGESTALMT…LENCVRRTAT (229 aa)) constitute a Sigma-54 factor interaction domain. Residues 228–235 (GETGTGKE) and 291–300 (ANGGTLLLDE) each bind ATP. The interval 429-498 (LARSKTITSS…SAGVASNLIE (70 aa)) is inter-domain linker. Residues Cys442 and Cys447 each contribute to the a divalent metal cation site. Positions 499 to 541 (RDRLISALEEAGWNQAKAARILEKTPRQVGYALRRHGVDVRKL) are C-terminal DNA-binding domain. The H-T-H motif DNA-binding region spans 513–532 (QAKAARILEKTPRQVGYALR).

As to quaternary structure, interacts with sigma-54.

Functionally, required for activation of most nif operons, which are directly involved in nitrogen fixation. In Rhizobium meliloti (strain 1021) (Ensifer meliloti), this protein is Nif-specific regulatory protein (nifA).